The primary structure comprises 321 residues: Aspartate carbamoyltransferase catalytic subunit (321 aa).

2 residues coordinate carbamoyl phosphate: Arg60 and Thr61. Lys88 is a binding site for L-aspartate. Arg110, His138, and Gln141 together coordinate carbamoyl phosphate. Residues Arg171 and Arg225 each contribute to the L-aspartate site. 2 residues coordinate carbamoyl phosphate: Gly266 and Pro267.

This sequence belongs to the aspartate/ornithine carbamoyltransferase superfamily. ATCase family. In terms of assembly, heterododecamer (2C3:3R2) of six catalytic PyrB chains organized as two trimers (C3), and six regulatory PyrI chains organized as three dimers (R2).

It carries out the reaction carbamoyl phosphate + L-aspartate = N-carbamoyl-L-aspartate + phosphate + H(+). The protein operates within pyrimidine metabolism; UMP biosynthesis via de novo pathway; (S)-dihydroorotate from bicarbonate: step 2/3. Functionally, catalyzes the condensation of carbamoyl phosphate and aspartate to form carbamoyl aspartate and inorganic phosphate, the committed step in the de novo pyrimidine nucleotide biosynthesis pathway. This is Aspartate carbamoyltransferase catalytic subunit from Sorangium cellulosum (strain So ce56) (Polyangium cellulosum (strain So ce56)).